The primary structure comprises 448 residues: uncharacterized protein (448 aa).

ATP is bound at residue 257-264 (GRNAQGKT).

This is an uncharacterized protein from Methanocaldococcus jannaschii (strain ATCC 43067 / DSM 2661 / JAL-1 / JCM 10045 / NBRC 100440) (Methanococcus jannaschii).